A 678-amino-acid chain; its full sequence is Probable N-methylproline demethylase (678 aa).

FMN is bound by residues G59, Q102, R220, K299, and 321–322 (TR). 3 residues coordinate [4Fe-4S] cluster: C345, C351, and C363. The FAD site is built by A396, E415, Q423, R433, and A460.

It in the N-terminal section; belongs to the NADH:flavin oxidoreductase/NADH oxidase family. FMN is required as a cofactor. Requires FAD as cofactor. [4Fe-4S] cluster serves as cofactor.

It carries out the reaction N-methyl-L-proline + NAD(+) + H2O = L-proline + formaldehyde + NADH + H(+). Its pathway is amine and polyamine degradation; stachydrine degradation. Functionally, possible NADH-dependent oxidase, may function as a demethylase that converts N-methylproline to proline. This Rhizobium meliloti (strain 1021) (Ensifer meliloti) protein is Probable N-methylproline demethylase.